Here is a 161-residue protein sequence, read N- to C-terminus: Ribonuclease P protein component 2 (161 aa).

It belongs to the eukaryotic/archaeal RNase P protein component 2 family. In terms of assembly, consists of a catalytic RNA component and at least 4-5 protein subunits.

It localises to the cytoplasm. It carries out the reaction Endonucleolytic cleavage of RNA, removing 5'-extranucleotides from tRNA precursor.. In terms of biological role, part of ribonuclease P, a protein complex that generates mature tRNA molecules by cleaving their 5'-ends. The chain is Ribonuclease P protein component 2 from Natronomonas pharaonis (strain ATCC 35678 / DSM 2160 / CIP 103997 / JCM 8858 / NBRC 14720 / NCIMB 2260 / Gabara) (Halobacterium pharaonis).